Consider the following 368-residue polypeptide: Alcohol dehydrogenase 6 (368 aa).

At serine 23 the chain carries Phosphoserine. Residues cysteine 47, histidine 69, cysteine 99, cysteine 102, cysteine 105, cysteine 113, and cysteine 175 each coordinate Zn(2+). Residues 200-205, aspartate 224, lysine 229, and 293-295 each bind NAD(+); these read GLGGVG and VGV.

The protein belongs to the zinc-containing alcohol dehydrogenase family. Class-V subfamily. Dimer. Zn(2+) serves as cofactor. As to expression, stomach and liver.

It localises to the cytoplasm. It catalyses the reaction a primary alcohol + NAD(+) = an aldehyde + NADH + H(+). The catalysed reaction is a secondary alcohol + NAD(+) = a ketone + NADH + H(+). Its activity is regulated as follows. Inhibited partially by pyrazole (10 mM) in the reaction mixture containing 100 mM ethanol at pH 10.0. Alcohol dehydrogenase. Catalyzes the NAD-dependent oxidation of primary alcohols to the corresponding aldehydes. Oxidizes secondary alcohols to the corresponding ketones. This is Alcohol dehydrogenase 6 (ADH6) from Homo sapiens (Human).